A 406-amino-acid chain; its full sequence is Nicotinate phosphoribosyltransferase (406 aa).

Position 227 is a phosphohistidine; by autocatalysis (histidine 227).

The protein belongs to the NAPRTase family. Post-translationally, transiently phosphorylated on a His residue during the reaction cycle. Phosphorylation strongly increases the affinity for substrates and increases the rate of nicotinate D-ribonucleotide production. Dephosphorylation regenerates the low-affinity form of the enzyme, leading to product release.

The catalysed reaction is nicotinate + 5-phospho-alpha-D-ribose 1-diphosphate + ATP + H2O = nicotinate beta-D-ribonucleotide + ADP + phosphate + diphosphate. The protein operates within cofactor biosynthesis; NAD(+) biosynthesis; nicotinate D-ribonucleotide from nicotinate: step 1/1. Catalyzes the synthesis of beta-nicotinate D-ribonucleotide from nicotinate and 5-phospho-D-ribose 1-phosphate at the expense of ATP. In Methanosarcina mazei (strain ATCC BAA-159 / DSM 3647 / Goe1 / Go1 / JCM 11833 / OCM 88) (Methanosarcina frisia), this protein is Nicotinate phosphoribosyltransferase.